Here is a 275-residue protein sequence, read N- to C-terminus: Ribosomal RNA small subunit methyltransferase A (275 aa).

Residues Asn-28, Leu-30, Gly-55, Glu-77, Asp-103, and Asn-123 each coordinate S-adenosyl-L-methionine.

The protein belongs to the class I-like SAM-binding methyltransferase superfamily. rRNA adenine N(6)-methyltransferase family. RsmA subfamily.

The protein resides in the cytoplasm. The enzyme catalyses adenosine(1518)/adenosine(1519) in 16S rRNA + 4 S-adenosyl-L-methionine = N(6)-dimethyladenosine(1518)/N(6)-dimethyladenosine(1519) in 16S rRNA + 4 S-adenosyl-L-homocysteine + 4 H(+). Specifically dimethylates two adjacent adenosines (A1518 and A1519) in the loop of a conserved hairpin near the 3'-end of 16S rRNA in the 30S particle. May play a critical role in biogenesis of 30S subunits. This Rhizobium etli (strain CIAT 652) protein is Ribosomal RNA small subunit methyltransferase A.